Consider the following 456-residue polypeptide: Bifunctional protein GlmU (456 aa).

Positions 1-229 (MSNSSMSVVI…LSEVEGVNNR (229 aa)) are pyrophosphorylase. Residues 11-14 (LAAG), Lys-25, Gln-76, 81-82 (GT), 103-105 (YGD), Gly-140, Glu-154, Asn-169, and Asn-227 contribute to the UDP-N-acetyl-alpha-D-glucosamine site. Mg(2+) is bound at residue Asp-105. Asn-227 is a Mg(2+) binding site. Residues 230–250 (LQLSALERVFQTEQAEKLLLA) form a linker region. Residues 251 to 456 (GVMLLDPSRF…QGWKRPVKKK (206 aa)) form an N-acetyltransferase region. Residues Arg-333 and Lys-351 each contribute to the UDP-N-acetyl-alpha-D-glucosamine site. Residue His-363 is the Proton acceptor of the active site. UDP-N-acetyl-alpha-D-glucosamine contacts are provided by Tyr-366 and Asn-377. Residues Ala-380, 386–387 (NY), Ser-405, Ala-423, and Arg-440 each bind acetyl-CoA.

It in the N-terminal section; belongs to the N-acetylglucosamine-1-phosphate uridyltransferase family. The protein in the C-terminal section; belongs to the transferase hexapeptide repeat family. As to quaternary structure, homotrimer. Requires Mg(2+) as cofactor.

The protein localises to the cytoplasm. It carries out the reaction alpha-D-glucosamine 1-phosphate + acetyl-CoA = N-acetyl-alpha-D-glucosamine 1-phosphate + CoA + H(+). The catalysed reaction is N-acetyl-alpha-D-glucosamine 1-phosphate + UTP + H(+) = UDP-N-acetyl-alpha-D-glucosamine + diphosphate. It participates in nucleotide-sugar biosynthesis; UDP-N-acetyl-alpha-D-glucosamine biosynthesis; N-acetyl-alpha-D-glucosamine 1-phosphate from alpha-D-glucosamine 6-phosphate (route II): step 2/2. The protein operates within nucleotide-sugar biosynthesis; UDP-N-acetyl-alpha-D-glucosamine biosynthesis; UDP-N-acetyl-alpha-D-glucosamine from N-acetyl-alpha-D-glucosamine 1-phosphate: step 1/1. It functions in the pathway bacterial outer membrane biogenesis; LPS lipid A biosynthesis. Functionally, catalyzes the last two sequential reactions in the de novo biosynthetic pathway for UDP-N-acetylglucosamine (UDP-GlcNAc). The C-terminal domain catalyzes the transfer of acetyl group from acetyl coenzyme A to glucosamine-1-phosphate (GlcN-1-P) to produce N-acetylglucosamine-1-phosphate (GlcNAc-1-P), which is converted into UDP-GlcNAc by the transfer of uridine 5-monophosphate (from uridine 5-triphosphate), a reaction catalyzed by the N-terminal domain. This Yersinia pseudotuberculosis serotype O:1b (strain IP 31758) protein is Bifunctional protein GlmU.